Consider the following 269-residue polypeptide: Putative ankyrin repeat protein L23 (269 aa).

5 ANK repeats span residues 118 to 147 (EDDY…DIKS), 148 to 177 (DGDY…DIRA), 179 to 207 (NDYA…NIRE), 208 to 237 (QNDY…DIRA), and 238 to 267 (DNDC…DIRA).

This Acanthamoeba polyphaga (Amoeba) protein is Putative ankyrin repeat protein L23.